Reading from the N-terminus, the 545-residue chain is Glutamine-dependent NAD(+) synthetase (545 aa).

The CN hydrolase domain maps to 5–247; sequence LRIAMAQFDF…DQWLVVDYMR (243 aa). Residue E46 is the Proton acceptor; for glutaminase activity of the active site. Catalysis depends on K113, which acts as the For glutaminase activity. Y119 contributes to the L-glutamine binding site. Residue C151 is the Nucleophile; for glutaminase activity of the active site. L-glutamine-binding residues include S177 and K183. Residues 269–545 are ligase; sequence VWRAVVRGVQ…RYPISNAYRG (277 aa). Position 292–299 (292–299) interacts with ATP; sequence GLSGGIDS. N375 contacts deamido-NAD(+). T399 is an ATP binding site. Residues E404 and K516 each contribute to the deamido-NAD(+) site.

In the C-terminal section; belongs to the NAD synthetase family.

It catalyses the reaction deamido-NAD(+) + L-glutamine + ATP + H2O = L-glutamate + AMP + diphosphate + NAD(+) + H(+). It functions in the pathway cofactor biosynthesis; NAD(+) biosynthesis; NAD(+) from deamido-NAD(+) (L-Gln route): step 1/1. In terms of biological role, catalyzes the ATP-dependent amidation of deamido-NAD to form NAD. Uses L-glutamine as a nitrogen source. This is Glutamine-dependent NAD(+) synthetase from Xylella fastidiosa (strain Temecula1 / ATCC 700964).